The chain runs to 944 residues: snRNA-activating protein complex subunit 4 homolog (944 aa).

The tract at residues 1 to 22 is disordered; that stretch reads MSDLVMFEPGASTSTDVPTNTD. Positions 11–22 are enriched in polar residues; the sequence is ASTSTDVPTNTD. Residues 177 to 244 enclose the Myb-like 1 domain; sequence TSNFDRRQWT…AVKSKWYNEL (68 aa). Residues 245–301 enclose the HTH myb-type 1 domain; sequence NPKWNKEHWSNEEVEKLKYLRESPKFVSWPMLALNLGTNRTSYQCMEKYKTEVSQHS. The segment at residues 273–297 is a DNA-binding region (H-T-H motif); the sequence is WPMLALNLGTNRTSYQCMEKYKTEV. One can recognise a Myb-like 2 domain in the interval 304–350; the sequence is WSQDEDTKLIALTKITSINGHIQWDKVAQCMPGRTRQQVRTRFSHTL. HTH myb-type domains follow at residues 351 to 406 and 407 to 459; these read DASV…NRSA and HVNE…AAKL. 2 consecutive DNA-binding regions (H-T-H motif) follow at residues 379 to 402 and 432 to 455; these read WAKVAQAVQNRNDSQCRERWTNVL and WAKCQMLLPKKTSRQLRRRYLQLI. A compositionally biased stretch (low complexity) spans 911-921; it reads ARPARPPRSSA. A disordered region spans residues 911-935; that stretch reads ARPARPPRSSAGTPTPSHVSIDTES. Positions 922 to 935 are enriched in polar residues; the sequence is GTPTPSHVSIDTES.

In terms of tissue distribution, broadly expressed in all tissues, including head, vulva and tail.

It localises to the nucleus. In terms of biological role, binds to the promoter regions of RNA polymerase II and III small-nuclear RNA genes, type 3 RNA polymerase III non-coding RNA genes, small nucleolar RNAs and transfer RNA genes. Required for expression of mature 21U-RNAs. This Caenorhabditis elegans protein is snRNA-activating protein complex subunit 4 homolog.